The sequence spans 644 residues: Threonine--tRNA ligase (644 aa).

The 62-residue stretch at 3-64 (EMIRITFPDG…QEDGSISIIT (62 aa)) folds into the TGS domain. A catalytic region spans residues 245-542 (DHRKLGKELE…LIEEYKGAFP (298 aa)). Zn(2+) is bound by residues cysteine 338, histidine 389, and histidine 519.

Belongs to the class-II aminoacyl-tRNA synthetase family. In terms of assembly, homodimer. It depends on Zn(2+) as a cofactor.

It localises to the cytoplasm. The catalysed reaction is tRNA(Thr) + L-threonine + ATP = L-threonyl-tRNA(Thr) + AMP + diphosphate + H(+). Functionally, catalyzes the attachment of threonine to tRNA(Thr) in a two-step reaction: L-threonine is first activated by ATP to form Thr-AMP and then transferred to the acceptor end of tRNA(Thr). Also edits incorrectly charged L-seryl-tRNA(Thr). The sequence is that of Threonine--tRNA ligase from Geobacillus sp. (strain WCH70).